A 191-amino-acid chain; its full sequence is Peptidyl-tRNA hydrolase (191 aa).

Residue Tyr-17 participates in tRNA binding. His-22 functions as the Proton acceptor in the catalytic mechanism. Residues Tyr-68, Asn-70, and Asn-116 each coordinate tRNA.

The protein belongs to the PTH family. In terms of assembly, monomer.

The protein localises to the cytoplasm. It carries out the reaction an N-acyl-L-alpha-aminoacyl-tRNA + H2O = an N-acyl-L-amino acid + a tRNA + H(+). Its function is as follows. Hydrolyzes ribosome-free peptidyl-tRNAs (with 1 or more amino acids incorporated), which drop off the ribosome during protein synthesis, or as a result of ribosome stalling. Catalyzes the release of premature peptidyl moieties from peptidyl-tRNA molecules trapped in stalled 50S ribosomal subunits, and thus maintains levels of free tRNAs and 50S ribosomes. The chain is Peptidyl-tRNA hydrolase from Mycolicibacterium smegmatis (strain ATCC 700084 / mc(2)155) (Mycobacterium smegmatis).